The sequence spans 319 residues: tRNA uridine(34) hydroxylase (319 aa).

The Rhodanese domain maps to 127 to 221 (KQEDTVIIDA…YGKDPEVQGE (95 aa)). Cys-181 functions as the Cysteine persulfide intermediate in the catalytic mechanism.

The protein belongs to the TrhO family.

The catalysed reaction is uridine(34) in tRNA + AH2 + O2 = 5-hydroxyuridine(34) in tRNA + A + H2O. Functionally, catalyzes oxygen-dependent 5-hydroxyuridine (ho5U) modification at position 34 in tRNAs. The protein is tRNA uridine(34) hydroxylase of Bacillus cereus (strain ATCC 10987 / NRS 248).